We begin with the raw amino-acid sequence, 704 residues long: Ion-translocating oxidoreductase complex subunit C (704 aa).

2 consecutive 4Fe-4S ferredoxin-type domains span residues 368–397 (MGAP…QQLY) and 407–436 (KATA…VQYF). [4Fe-4S] cluster contacts are provided by C377, C380, C383, C387, C416, C419, C422, and C426. The disordered stretch occupies residues 536–685 (RAKQAAHPMA…ADPRKAAVAA (150 aa)). The segment covering 556–565 (KAAVEAAIAR) has biased composition (low complexity).

The protein belongs to the 4Fe4S bacterial-type ferredoxin family. RnfC subfamily. The complex is composed of six subunits: RsxA, RsxB, RsxC, RsxD, RsxE and RsxG. The cofactor is [4Fe-4S] cluster.

The protein resides in the cell inner membrane. Functionally, part of a membrane-bound complex that couples electron transfer with translocation of ions across the membrane. Required to maintain the reduced state of SoxR. In Salmonella dublin (strain CT_02021853), this protein is Ion-translocating oxidoreductase complex subunit C.